A 195-amino-acid chain; its full sequence is dCTP deaminase (195 aa).

DCTP is bound by residues 109–114 (RSSLAR), aspartate 127, 135–137 (TLE), tyrosine 170, lysine 177, and glutamine 181. The active-site Proton donor/acceptor is the glutamate 137.

It belongs to the dCTP deaminase family. In terms of assembly, homotrimer.

It catalyses the reaction dCTP + H2O + H(+) = dUTP + NH4(+). It participates in pyrimidine metabolism; dUMP biosynthesis; dUMP from dCTP (dUTP route): step 1/2. Functionally, catalyzes the deamination of dCTP to dUTP. This Rhodospirillum rubrum (strain ATCC 11170 / ATH 1.1.1 / DSM 467 / LMG 4362 / NCIMB 8255 / S1) protein is dCTP deaminase.